Reading from the N-terminus, the 87-residue chain is Conotoxin QcMNCL-XIII0.1 (87 aa).

The N-terminal stretch at 1–18 is a signal peptide; that stretch reads MNCLQLLLVLLLISTIAA. The propeptide occupies 19–34; it reads LHGDGRVPQRRGRNIR.

Post-translationally, contains 4 disulfide bonds. In terms of tissue distribution, expressed by the venom duct.

The protein localises to the secreted. May interact and inhibit Cav3.1/CACNA1G calcium channels. In a ex vivo model, shows ability to block nerve signal transduction. The sequence is that of Conotoxin QcMNCL-XIII0.1 from Conus quercinus (Oak cone).